The chain runs to 319 residues: DNA-directed RNA polymerases II, IV and V subunit 3 (319 aa).

M1 bears the N-acetylmethionine mark.

This sequence belongs to the archaeal Rpo3/eukaryotic RPB3 RNA polymerase subunit family. As to quaternary structure, component of the RNA polymerase II complex consisting of at least 12 subunits. Interacts with SHH1, CLSY1, NRPB11 and NRPD1. Interacts with IYO.

It is found in the nucleus. Its function is as follows. DNA-dependent RNA polymerase catalyzes the transcription of DNA into RNA using the four ribonucleoside triphosphates as substrates. Component of RNA polymerase II which synthesizes mRNA precursors and many functional non-coding RNAs. Pol II is the central component of the basal RNA polymerase II transcription machinery. It is composed of mobile elements that move relative to each other. NRPB3 is part of the core element with the central large cleft and the clamp element that moves to open and close the cleft. Component of RNA polymerases IV and V which mediate short-interfering RNAs (siRNA) accumulation and subsequent RNA-directed DNA methylation-dependent (RdDM) transcriptional gene silencing (TGS) of endogenous repeated sequences, including transposable elements. The sequence is that of DNA-directed RNA polymerases II, IV and V subunit 3 (NRPB3) from Arabidopsis thaliana (Mouse-ear cress).